A 382-amino-acid polypeptide reads, in one-letter code: Gap junction alpha-1 protein (382 aa).

At 2 to 23 (GDWSALGKLLDKVQAYSTAGGK) the chain is on the cytoplasmic side. At Ser-5 the chain carries Phosphoserine. Residues 24-44 (VWLSVLFIFRILLLGTAVESA) traverse the membrane as a helical segment. Residues 45 to 76 (WGDEQSAFRCNTQQPGCENVCYDKSFPISHVR) lie on the Extracellular side of the membrane. 2 disulfides stabilise this stretch: Cys-54-Cys-192 and Cys-187-Cys-198. A helical membrane pass occupies residues 77–97 (FWVLQIIFVSVPTLLYLAHVF). The Cytoplasmic portion of the chain corresponds to 98–155 (YVMRKEEKLNKKEEELKVAQTDGVNVEMHLKQIEIKKFKYGIEEHGKVKMRGGLLRTY). A Glycyl lysine isopeptide (Lys-Gly) (interchain with G-Cter in SUMO) cross-link involves residue Lys-144. Residues 156-176 (IISILFKSIFEVAFLLIQWYI) traverse the membrane as a helical segment. Residues 177 to 207 (YGFSLSAVYTCKRDPCPHQVDCFLSRPTEKT) are Extracellular-facing. The helical transmembrane segment at 208–228 (IFIIFMLVVSLVSLALNIIEL) threads the bilayer. Residues 229–382 (FYVFFKGVKD…SRPRPDDLEI (154 aa)) are Cytoplasmic-facing. A Glycyl lysine isopeptide (Lys-Gly) (interchain with G-Cter in SUMO) cross-link involves residue Lys-237. Positions 244-382 (SDPYHATSGA…SRPRPDDLEI (139 aa)) are interaction with NOV. Tyr-247 is subject to Phosphotyrosine. 2 positions are modified to phosphoserine: Ser-255 and Ser-262. The interval 264-382 (KYAYFNGCSS…SRPRPDDLEI (119 aa)) is interaction with UBQLN4. S-nitrosocysteine is present on Cys-271. The residue at position 275 (Thr-275) is a Phosphothreonine. Residues 279–300 (SPMSPPGYKPVTGDRNNSSCRN) are disordered. Ser-306 and Ser-314 each carry phosphoserine. A compositionally biased stretch (polar residues) spans 317-332 (QNRMGQAGSTISNSHA). Positions 317–382 (QNRMGQAGST…SRPRPDDLEI (66 aa)) are disordered. Residue Ser-325 is modified to Phosphoserine; by CK1. Thr-326 is subject to Phosphothreonine. Residues Ser-328 and Ser-330 each carry the phosphoserine; by CK1 modification. A phosphoserine mark is found at Ser-344 and Ser-365. The span at 362–374 (RPSSRASSRASSR) shows a compositional bias: low complexity. Ser-368 is modified (phosphoserine; by PKC/PRKCG and PKC/PRKCD). A phosphoserine mark is found at Ser-369 and Ser-373.

The protein belongs to the connexin family. Alpha-type (group II) subfamily. A connexon is composed of a hexamer of connexins. Interacts with SGSM3. Interacts with RIC1/CIP150. Interacts with CNST and CSNK1D. Interacts (via C-terminus) with TJP1. Interacts (via C-terminus) with SRC (via SH3 domain). Interacts (not ubiquitinated) with UBQLN4 (via UBA domain). Interacts with NOV. Interacts with TMEM65. Interacts with ANK3/ANKG and PKP2. In terms of processing, phosphorylation at Ser-325, Ser-328 and Ser-330 by CK1 modulates gap junction assembly. Phosphorylated at Ser-368 by PRKCG; phosphorylation induces disassembly of gap junction plaques and inhibition of gap junction activity. Phosphorylation at Ser-368 by PRKCD triggers its internalization into small vesicles leading to proteasome-mediated degradation. Post-translationally, sumoylated with SUMO1, SUMO2 and SUMO3, which may regulate the level of functional Cx43 gap junctions at the plasma membrane. May be desumoylated by SENP1 or SENP2. S-nitrosylation at Cys-271 is enriched at the muscle endothelial gap junction in arteries, it augments channel permeability and may regulate of smooth muscle cell to endothelial cell communication. In terms of processing, acetylated in the developing cortex; leading to delocalization from the cell membrane.

Its subcellular location is the cell membrane. It is found in the cell junction. The protein localises to the gap junction. It localises to the endoplasmic reticulum. Functionally, gap junction protein that acts as a regulator of bladder capacity. A gap junction consists of a cluster of closely packed pairs of transmembrane channels, the connexons, through which materials of low MW diffuse from one cell to a neighboring cell. May play a critical role in the physiology of hearing by participating in the recycling of potassium to the cochlear endolymph. Negative regulator of bladder functional capacity: acts by enhancing intercellular electrical and chemical transmission, thus sensitizing bladder muscles to cholinergic neural stimuli and causing them to contract. May play a role in cell growth inhibition through the regulation of NOV expression and localization. Plays an essential role in gap junction communication in the ventricles. The sequence is that of Gap junction alpha-1 protein (GJA1) from Macaca fascicularis (Crab-eating macaque).